A 625-amino-acid chain; its full sequence is 1-deoxy-D-xylulose-5-phosphate synthase (625 aa).

Residues His80 and 121 to 123 (GHS) contribute to the thiamine diphosphate site. Residue Asp152 coordinates Mg(2+). Residues 153–154 (GS), Asn181, Tyr290, and Glu371 each bind thiamine diphosphate. Asn181 lines the Mg(2+) pocket.

Belongs to the transketolase family. DXPS subfamily. As to quaternary structure, homodimer. Requires Mg(2+) as cofactor. Thiamine diphosphate is required as a cofactor.

It catalyses the reaction D-glyceraldehyde 3-phosphate + pyruvate + H(+) = 1-deoxy-D-xylulose 5-phosphate + CO2. It functions in the pathway metabolic intermediate biosynthesis; 1-deoxy-D-xylulose 5-phosphate biosynthesis; 1-deoxy-D-xylulose 5-phosphate from D-glyceraldehyde 3-phosphate and pyruvate: step 1/1. Its function is as follows. Catalyzes the acyloin condensation reaction between C atoms 2 and 3 of pyruvate and glyceraldehyde 3-phosphate to yield 1-deoxy-D-xylulose-5-phosphate (DXP). The polypeptide is 1-deoxy-D-xylulose-5-phosphate synthase (Haemophilus influenzae (strain PittGG)).